The sequence spans 356 residues: tRNA-specific 2-thiouridylase MnmA (356 aa).

Residues 6–13 and Leu-32 each bind ATP; that span reads AMSGGVDS. The active-site Nucleophile is the Cys-101. Cys-101 and Cys-193 are joined by a disulfide. An ATP-binding site is contributed by Gly-125. The interaction with tRNA stretch occupies residues 143–145; sequence KDQ. Cys-193 (cysteine persulfide intermediate) is an active-site residue.

The protein belongs to the MnmA/TRMU family.

The protein localises to the cytoplasm. The catalysed reaction is S-sulfanyl-L-cysteinyl-[protein] + uridine(34) in tRNA + AH2 + ATP = 2-thiouridine(34) in tRNA + L-cysteinyl-[protein] + A + AMP + diphosphate + H(+). Functionally, catalyzes the 2-thiolation of uridine at the wobble position (U34) of tRNA, leading to the formation of s(2)U34. The chain is tRNA-specific 2-thiouridylase MnmA from Mycolicibacterium smegmatis (strain ATCC 700084 / mc(2)155) (Mycobacterium smegmatis).